The chain runs to 294 residues: MHPRFQTAFAQLADNLQSALEPILADKYFPALLTGEQVSSLKSATGLDEDALAFALLPLAAACARTPLSNFNVGAIARGVSGTWYFGANMEFIGATMQQTVHAEQSAISHAWLSGEKALAAITVNYTPCGHCRQFMNELNSGLDLRIHLPGREAHALRDYLADAFGPKDLEIKTLLMDEQDHGYALTGDALSQAAIAAANRSHMPYSKSPSGVALECKDGRIFSGSYAENAAFNPTLPPLQGALILLNLKGYDYPDIQRAVLAEKADAPLIQWDATSATLKALGCHNIDRVLLA.

2 consecutive CMP/dCMP-type deaminase domains span residues 48–168 (DEDA…FGPK) and 186–294 (LTGD…VLLA). 89 to 91 (NME) contributes to the substrate binding site. Histidine 102 is a Zn(2+) binding site. Glutamate 104 serves as the catalytic Proton donor. Positions 129 and 132 each coordinate Zn(2+).

It belongs to the cytidine and deoxycytidylate deaminase family. As to quaternary structure, homodimer. The cofactor is Zn(2+).

It catalyses the reaction cytidine + H2O + H(+) = uridine + NH4(+). The enzyme catalyses 2'-deoxycytidine + H2O + H(+) = 2'-deoxyuridine + NH4(+). This enzyme scavenges exogenous and endogenous cytidine and 2'-deoxycytidine for UMP synthesis. The polypeptide is Cytidine deaminase (Escherichia coli O157:H7).